Consider the following 2130-residue polypeptide: Highly reducing polyketide synthase anuA (2130 aa).

One can recognise a Ketosynthase family 3 (KS3) domain in the interval 1 to 213 (MKAGVLSGTS…GANCHVILEQ (213 aa)). Residues 317-644 (FVFTGQGSQW…SFAGNLWLKG (328 aa)) enclose the Malonyl-CoA:ACP transacylase (MAT) domain. The interval 701–836 (HELLGSLLTG…GSIAIHPRNA (136 aa)) is N-terminal hotdog fold. Residues 701 to 1000 (HELLGSLLTG…LSPYQSTSQA (300 aa)) enclose the PKS/mFAS DH domain. The Proton acceptor; for dehydratase activity role is filled by His733. A C-terminal hotdog fold region spans residues 849-1000 (LESTAKRTWY…LSPYQSTSQA (152 aa)). The Proton donor; for dehydratase activity role is filled by Asp914. Positions 1405-1722 (GQLDTIYFQQ…SRSRIGKVAI (318 aa)) constitute an Enoyl reductase (ER) domain. In terms of domain architecture, Ketoreductase (KR) spans 1747 to 1927 (SYVMVGCLGG…AVAVGLGMIS (181 aa)). The Carrier domain occupies 2047 to 2125 (TLDEAVLDHI…SLRDLAMTSL (79 aa)). An O-(pantetheine 4'-phosphoryl)serine modification is found at Ser2084.

Requires pantetheine 4'-phosphate as cofactor.

The protein operates within secondary metabolite biosynthesis. Highly reducing polyketide synthase; part of the gene cluster that mediates the biosynthesis of annullatin D, an alkylated aromatic polyketide with a fused dihydrobenzofuran lactone ring system that exhibits potent agonistic activities toward the cannabinoid receptors. The annullatin backbone 2-hydroxymethyl-3-pentylphenol is assembled from one acetyl-CoA starter unit and 5 malonyl-CoA elongation units by cooperation of the highly reducing polyketide synthase anuA, the short-chain dehydrogenase anuB and the oxidoreductase anuC, before being hydroxylated at the C-5 alkyl chain by the cytochrome P450 monooxygenase anuE to form (8S)-annullatin E. The prenyltransferase anuH subsequently installs one isoprenyl group at the benzene ring to form (8S)-annullatin J. Enzymatic or nonenzymatic dihydro-benzofuran ring formation between the prenyl and the phenolic hydroxyl groups in (8S)-annullatin J results in two diastereomers (2S,9S)-annullatin H and compound 12. The intermediate (2S,9S)-annullatin H is then converted to (2S,9S)-annullatin D by the FAD-linked oxidoreductase anuG-catalyzed five-member lactone ring formation. The isomer 12 acts as a substrate for the short-chain dehydrogenase anuF and is oxidized to (2R)-annullatin F, which is subsequently acetylated by an acetyltransferase leading to (2R)-annullatin G formation. The remaining enzymes identified within the cluster, anuD, anuI and anuJ, seem not to be involved in annullatin biosynthesis. In Penicillium roqueforti (strain FM164), this protein is Highly reducing polyketide synthase anuA.